A 657-amino-acid polypeptide reads, in one-letter code: UvrABC system protein B (657 aa).

The Helicase ATP-binding domain occupies 29-416 (KLAEFQTNEQ…LSHNNVVEQL (388 aa)). An ATP-binding site is contributed by 42-49 (GATGTGKT). The short motif at 95–118 (YFDFYQPEAYLPAKGVYIEKSATV) is the Beta-hairpin element. In terms of domain architecture, Helicase C-terminal spans 435 to 597 (QVEDLVSEII…KTPMTVQKPI (163 aa)). One can recognise a UVR domain in the interval 615-650 (AALIKQLTKEMKQAAANQNYELAIEIRDSIFELEKQ).

The protein belongs to the UvrB family. In terms of assembly, forms a heterotetramer with UvrA during the search for lesions. Interacts with UvrC in an incision complex.

It is found in the cytoplasm. The UvrABC repair system catalyzes the recognition and processing of DNA lesions. A damage recognition complex composed of 2 UvrA and 2 UvrB subunits scans DNA for abnormalities. Upon binding of the UvrA(2)B(2) complex to a putative damaged site, the DNA wraps around one UvrB monomer. DNA wrap is dependent on ATP binding by UvrB and probably causes local melting of the DNA helix, facilitating insertion of UvrB beta-hairpin between the DNA strands. Then UvrB probes one DNA strand for the presence of a lesion. If a lesion is found the UvrA subunits dissociate and the UvrB-DNA preincision complex is formed. This complex is subsequently bound by UvrC and the second UvrB is released. If no lesion is found, the DNA wraps around the other UvrB subunit that will check the other stand for damage. The sequence is that of UvrABC system protein B from Mycoplasma pneumoniae (strain ATCC 29342 / M129 / Subtype 1) (Mycoplasmoides pneumoniae).